We begin with the raw amino-acid sequence, 429 residues long: MQVSVETTQGLGRRVTITIAADSIETAVKSELVNVAKKVRIDGFRKGKVPMNIVAQRYGASVRQDVLGDLMSRNFIDAIIKEKINPAGAPTYVPGEYKLGEDFTYSVEFEVYPEVELQGLEAIEVEKPIVEVTDADVDGMLDTLRKQQATWKEKDGAVEAEDRVTIDFTGSVDGEEFEGGKASDFVLAMGQGRMIPGFEDGIKGHKAGEEFTIDVTFPEEYHAENLKGKAAKFAINLKKVEERELPELTAEFIKRFGVEDGSVEGLRAEVRKNMERELKSAIRNRVKSQAIEGLVKANDIDVPAALIDSEIDVLRRQAAQRFGGNEKQALELPRELFEEQAKRRVVVGLLLGEVIRTNELKADEERVKGLIEEMASAYEDPKEVIEFYSKNKELMDNMRNVALEEQAVEAVLAKAKVTEKETTFNELMN.

The 86-residue stretch at 161–246 (EDRVTIDFTG…LKKVEERELP (86 aa)) folds into the PPIase FKBP-type domain.

The protein belongs to the FKBP-type PPIase family. Tig subfamily. Homodimer and monomer. In vivo most of the ribosomes are in complex with monomeric TF. Uncomplexed TF, however, is in a monomer-dimer equilibrium with approximately two thirds of TF existing in a dimeric state.

The protein localises to the cytoplasm. The enzyme catalyses [protein]-peptidylproline (omega=180) = [protein]-peptidylproline (omega=0). Its function is as follows. Involved in protein export. Acts as a chaperone by maintaining the newly synthesized protein in an open conformation. Functions as a peptidyl-prolyl cis-trans isomerase. This Escherichia coli O45:K1 (strain S88 / ExPEC) protein is Trigger factor.